Reading from the N-terminus, the 40-residue chain is MANTTGRIPLWLIGTIAGILVIGLVGIFFYGSYSGLGSSL.

A helical transmembrane segment spans residues 8–28; that stretch reads IPLWLIGTIAGILVIGLVGIF.

It belongs to the PsbJ family. As to quaternary structure, PSII is composed of 1 copy each of membrane proteins PsbA, PsbB, PsbC, PsbD, PsbE, PsbF, PsbH, PsbI, PsbJ, PsbK, PsbL, PsbM, PsbT, PsbX, PsbY, PsbZ, Psb30/Ycf12, at least 3 peripheral proteins of the oxygen-evolving complex and a large number of cofactors. It forms dimeric complexes.

The protein resides in the plastid. It is found in the chloroplast thylakoid membrane. Functionally, one of the components of the core complex of photosystem II (PSII). PSII is a light-driven water:plastoquinone oxidoreductase that uses light energy to abstract electrons from H(2)O, generating O(2) and a proton gradient subsequently used for ATP formation. It consists of a core antenna complex that captures photons, and an electron transfer chain that converts photonic excitation into a charge separation. This chain is Photosystem II reaction center protein J, found in Anthoceros angustus (Hornwort).